Reading from the N-terminus, the 291-residue chain is Probable endonuclease 4 (291 aa).

9 residues coordinate Zn(2+): His-72, His-112, Glu-147, Asp-181, His-184, His-215, Asp-228, His-230, and Glu-260.

This sequence belongs to the AP endonuclease 2 family. The cofactor is Zn(2+).

The enzyme catalyses Endonucleolytic cleavage to 5'-phosphooligonucleotide end-products.. Its function is as follows. Endonuclease IV plays a role in DNA repair. It cleaves phosphodiester bonds at apurinic or apyrimidinic (AP) sites, generating a 3'-hydroxyl group and a 5'-terminal sugar phosphate. This chain is Probable endonuclease 4, found in Mycoplasma genitalium (strain ATCC 33530 / DSM 19775 / NCTC 10195 / G37) (Mycoplasmoides genitalium).